An 885-amino-acid polypeptide reads, in one-letter code: Translation initiation factor IF-2 (885 aa).

2 disordered regions span residues 55–150 (IPDK…ADVT) and 269–300 (NTIN…EAVT). The span at 65–146 (EPKAKKEPKK…AEAPKPKESL (82 aa)) shows a compositional bias: basic and acidic residues. Positions 281 to 290 (RRARKKHKKP) are enriched in basic residues. Residues 384–553 (PRAPVITIMG…LLQADLLELK (170 aa)) enclose the tr-type G domain. The G1 stretch occupies residues 393-400 (GHVDHGKT). 393–400 (GHVDHGKT) contacts GTP. The tract at residues 418 to 422 (GITQH) is G2. The segment at 439–442 (DTPG) is G3. GTP contacts are provided by residues 439 to 443 (DTPGH) and 493 to 496 (NKMD). Positions 493 to 496 (NKMD) are G4. Positions 529-531 (SAK) are G5.

Belongs to the TRAFAC class translation factor GTPase superfamily. Classic translation factor GTPase family. IF-2 subfamily.

Its subcellular location is the cytoplasm. In terms of biological role, one of the essential components for the initiation of protein synthesis. Protects formylmethionyl-tRNA from spontaneous hydrolysis and promotes its binding to the 30S ribosomal subunits. Also involved in the hydrolysis of GTP during the formation of the 70S ribosomal complex. This Campylobacter concisus (strain 13826) protein is Translation initiation factor IF-2.